A 1118-amino-acid polypeptide reads, in one-letter code: Protein argonaute 1B (1118 aa).

2 disordered regions span residues 1 to 175 (MALQ…SRTV) and 188 to 246 (APMV…RFPL). A compositionally biased stretch (basic residues) spans 10–24 (PHHHQVPIMVKKKRT). Over residues 25–35 (GSGSTGESSGE) the composition is skewed to low complexity. Composition is skewed to gly residues over residues 54–92 (QHGG…HHPG), 100–110 (GRGGPGSHHPG), and 118–128 (GRGGSGSHHPG). Low complexity-rich tracts occupy residues 148-157 (RGGMPQPYYG) and 193-219 (PTPS…QFQQ). The span at 220–241 (LATRDQSSTSQAIQIAPPSSKS) shows a compositional bias: polar residues. Residues 457–570 (PVIDFVAQLL…LPMEVCKIVE (114 aa)) enclose the PAZ domain. One can recognise a Piwi domain in the interval 746 to 1067 (LLIVILPDNN…AAFRARFYME (322 aa)).

It belongs to the argonaute family. Ago subfamily.

Functionally, probably involved in the RNA silencing pathway. May bind to short RNAs such as microRNAs (miRNAs) or short interfering RNAs (siRNAs), and represses the translation of mRNAs which are complementary to them. The protein is Protein argonaute 1B (AGO1B) of Oryza sativa subsp. japonica (Rice).